A 1412-amino-acid polypeptide reads, in one-letter code: Erbin (1412 aa).

17 LRR repeats span residues 23 to 44, 47 to 68, 70 to 91, 93 to 114, 116 to 137, 139 to 161, 162 to 183, 185 to 206, 208 to 229, 231 to 252, 254 to 275, 277 to 298, 300 to 321, 323 to 344, 346 to 367, 369 to 391, and 392 to 413; these read TVTT…IFTF, TLEE…LFNC, SLHK…IANL, NLRE…IKNC, VLTI…FSQL, NLTQ…GRLT, KLQI…MNRL, QLER…LEQL, GLKE…IGSL, QLTY…ISTC, NLQD…IGSL, NITT…IGGL, SVEE…IGQL, NLRT…IGSW, NITV…MGDM, KLKV…TKLQ, and QLTA…QKET. 2 positions are modified to phosphoserine: serine 440 and serine 444. Disordered stretches follow at residues 464-489 and 506-542; these read CDED…PYPD and KDEE…TTTV. A compositionally biased stretch (basic and acidic residues) spans 470–480; that stretch reads EREAPPREGNL. At tyrosine 483 the chain carries Phosphotyrosine. Position 485 is a phosphothreonine (threonine 485). The span at 506-532 shows a compositional bias: basic and acidic residues; sequence KDEETNEDSGRDLKPHEDQQDINKDVG. The span at 533–542 shows a compositional bias: low complexity; it reads VKTSESTTTV. 5 positions are modified to phosphoserine: serine 569, serine 598, serine 602, serine 603, and serine 620. The interval 615–681 is disordered; that stretch reads PLIETSINQP…TDSSQDTSLC (67 aa). A compositionally biased stretch (basic and acidic residues) spans 632–641; sequence NKKDDTKETD. The span at 650–662 shows a compositional bias: low complexity; sequence NSNQNNSNCSSPS. The segment covering 663 to 681 has biased composition (polar residues); sequence RMSDSVSLNTDSSQDTSLC. Phosphoserine is present on serine 715. The segment at 803–867 is disordered; the sequence is ETEHLENGNK…PQKSGPVGSV (65 aa). Residues 817 to 835 are compositionally biased toward polar residues; the sequence is ESVNKVNGHSEETSQSPNR. Serine 852, serine 857, and serine 872 each carry phosphoserine. At threonine 917 the chain carries Phosphothreonine. At tyrosine 920 the chain carries Phosphotyrosine. Serine 931 is modified (phosphoserine). Tyrosine 972 bears the Phosphotyrosine mark. Disordered regions lie at residues 997–1021 and 1075–1192; these read NPQI…NQSY and QRQS…KSKV. Over residues 1075–1086 the composition is skewed to polar residues; sequence QRQSSVSSTASV. Tyrosine 1104 is modified (phosphotyrosine). Residues 1157-1171 show a composition bias toward polar residues; sequence MSVSDFNYSRTSPSK. Phosphoserine occurs at positions 1158, 1179, and 1286. Positions 1321 to 1410 constitute a PDZ domain; it reads EIRVRVEKDP…TVELIIVREV (90 aa).

This sequence belongs to the LAP (LRR and PDZ) protein family. Interacts with ERBB2, BPAG1 and ITGB4. May favor the localization of ERBB2, by restricting its presence to the basolateral membrane of epithelial cells. Also found to interact with ARVCF and delta catenin. Interacts (via C-terminus) with DST Isoform 3 (via N-terminus). Interacts with NOD2 (via CARD domain). Highly expressed in brain, heart, kidney, muscle and stomach, followed by liver, spleen and intestine.

The protein resides in the cell junction. Its subcellular location is the hemidesmosome. It is found in the nucleus membrane. It localises to the basolateral cell membrane. In terms of biological role, acts as an adapter for the receptor ERBB2, in epithelia. By binding the unphosphorylated 'Tyr-1248' of receptor ERBB2, it may contribute to stabilize this unphosphorylated state. Inhibits NOD2-dependent NF-kappa-B signaling and pro-inflammatory cytokine secretion. This Homo sapiens (Human) protein is Erbin.